The following is a 211-amino-acid chain: Uracil phosphoribosyltransferase (211 aa).

Residues Arg-78, Arg-103, and Asp-130–Ser-138 contribute to the 5-phospho-alpha-D-ribose 1-diphosphate site. Residues Ile-193 and Gly-198–Ala-200 contribute to the uracil site. Asp-199 is a binding site for 5-phospho-alpha-D-ribose 1-diphosphate.

It belongs to the UPRTase family. It depends on Mg(2+) as a cofactor.

The catalysed reaction is UMP + diphosphate = 5-phospho-alpha-D-ribose 1-diphosphate + uracil. Its pathway is pyrimidine metabolism; UMP biosynthesis via salvage pathway; UMP from uracil: step 1/1. Allosterically activated by GTP. Its function is as follows. Catalyzes the conversion of uracil and 5-phospho-alpha-D-ribose 1-diphosphate (PRPP) to UMP and diphosphate. The polypeptide is Uracil phosphoribosyltransferase (Acinetobacter baumannii (strain AB307-0294)).